An 817-amino-acid chain; its full sequence is U3 small nucleolar RNA-associated protein 13 (817 aa).

12 WD repeats span residues 59–100, 102–139, 142–187, 191–233, 238–280, 386–425, 432–476, 489–528, 531–572, 573–614, 616–654, and 664–705; these read EDEQ…RSMK, SSPS…ITHS, GHGG…HTLQ, SAVR…KCKL, PVNQ…VLKR, GHED…CKFD, GHSA…ASMD, AHEK…LEAT, NHKR…KTLE, GHTN…KTLD, HNNR…EIEE, and EQEQ…LGES.

As to quaternary structure, interacts with snoRNA U3. Interacts with MPP10. Component of the ribosomal small subunit (SSU) processome composed of at least 40 protein subunits and snoRNA U3.

It is found in the nucleus. The protein resides in the nucleolus. Involved in nucleolar processing of pre-18S ribosomal RNA. The sequence is that of U3 small nucleolar RNA-associated protein 13 (UTP13) from Saccharomyces cerevisiae (strain ATCC 204508 / S288c) (Baker's yeast).